We begin with the raw amino-acid sequence, 426 residues long: L-cysteine:1D-myo-inositol 2-amino-2-deoxy-alpha-D-glucopyranoside ligase (426 aa).

Cys45 contributes to the Zn(2+) binding site. L-cysteinyl-5'-AMP-binding positions include 45-48, Thr60, and 83-85; these read CGIT and NVT. Residues 47 to 57 carry the 'HIGH' region motif; sequence ITPYDATHIGH. A 'ERGGDP' region motif is present at residues 199–204; sequence ERGGDP. Trp239 lines the L-cysteinyl-5'-AMP pocket. A Zn(2+)-binding site is contributed by Cys243. 261–263 provides a ligand contact to L-cysteinyl-5'-AMP; sequence GSD. His268 serves as a coordination point for Zn(2+). Val294 provides a ligand contact to L-cysteinyl-5'-AMP. The short motif at 300 to 304 is the 'KMSKS' region element; it reads KMSKS.

The protein belongs to the class-I aminoacyl-tRNA synthetase family. MshC subfamily. As to quaternary structure, monomer. Requires Zn(2+) as cofactor.

It catalyses the reaction 1D-myo-inositol 2-amino-2-deoxy-alpha-D-glucopyranoside + L-cysteine + ATP = 1D-myo-inositol 2-(L-cysteinylamino)-2-deoxy-alpha-D-glucopyranoside + AMP + diphosphate + H(+). Its function is as follows. Catalyzes the ATP-dependent condensation of GlcN-Ins and L-cysteine to form L-Cys-GlcN-Ins. This Clavibacter michiganensis subsp. michiganensis (strain NCPPB 382) protein is L-cysteine:1D-myo-inositol 2-amino-2-deoxy-alpha-D-glucopyranoside ligase.